A 426-amino-acid chain; its full sequence is Phosphoribosylamine--glycine ligase (426 aa).

Residues 109 to 312 (KEVMEAAGVA…LAGVLNAVAT (204 aa)) enclose the ATP-grasp domain. Residue 138 to 193 (LDYFGPMYVVKDDGLAAGKGVVVTADRAEARQHIHLVHAAGNPVLLESFLDGPEVS) participates in ATP binding. Mg(2+) is bound by residues Glu282 and Asn284.

It belongs to the GARS family. Mg(2+) serves as cofactor. Mn(2+) is required as a cofactor.

It catalyses the reaction 5-phospho-beta-D-ribosylamine + glycine + ATP = N(1)-(5-phospho-beta-D-ribosyl)glycinamide + ADP + phosphate + H(+). Its pathway is purine metabolism; IMP biosynthesis via de novo pathway; N(1)-(5-phospho-D-ribosyl)glycinamide from 5-phospho-alpha-D-ribose 1-diphosphate: step 2/2. In Corynebacterium ammoniagenes (Brevibacterium ammoniagenes), this protein is Phosphoribosylamine--glycine ligase.